The sequence spans 100 residues: Aspartyl/glutamyl-tRNA(Asn/Gln) amidotransferase subunit C (100 aa).

This sequence belongs to the GatC family. As to quaternary structure, heterotrimer of A, B and C subunits.

It carries out the reaction L-glutamyl-tRNA(Gln) + L-glutamine + ATP + H2O = L-glutaminyl-tRNA(Gln) + L-glutamate + ADP + phosphate + H(+). The enzyme catalyses L-aspartyl-tRNA(Asn) + L-glutamine + ATP + H2O = L-asparaginyl-tRNA(Asn) + L-glutamate + ADP + phosphate + 2 H(+). Functionally, allows the formation of correctly charged Asn-tRNA(Asn) or Gln-tRNA(Gln) through the transamidation of misacylated Asp-tRNA(Asn) or Glu-tRNA(Gln) in organisms which lack either or both of asparaginyl-tRNA or glutaminyl-tRNA synthetases. The reaction takes place in the presence of glutamine and ATP through an activated phospho-Asp-tRNA(Asn) or phospho-Glu-tRNA(Gln). This is Aspartyl/glutamyl-tRNA(Asn/Gln) amidotransferase subunit C from Rickettsia bellii (strain OSU 85-389).